We begin with the raw amino-acid sequence, 826 residues long: (2S)-3-sulfopropanediol dehydratase (826 aa).

The PFL domain maps to 33–695 (PRVNRLRQAF…NTNASIDGRK (663 aa)). The active-site Cysteine radical intermediate is the Cys464. The active-site Proton acceptor is Glu466. Residues 706 to 826 (PVHTDGGSHD…DLIQRTELHF (121 aa)) enclose the Glycine radical domain. Gly802 carries the post-translational modification Glycine radical.

This sequence belongs to the glycyl radical enzyme (GRE) family. Post-translationally, requires the activating protein HpfH to generate the key active site glycyl radical on Gly-802 that is involved in catalysis.

It carries out the reaction (2S)-3-sulfopropanediol = 3-oxopropane-1-sulfonate + H2O. It participates in organosulfur degradation; alkanesulfonate degradation. In terms of biological role, involved in the degradation of the organosulfur compound 2(S)-dihydroxypropanesulfonate (DHPS). Catalyzes the radical-mediated dehydration of DHPS to produce 3-sulfopropionaldehyde (3-oxopropane-1-sulfonate). The chain is (2S)-3-sulfopropanediol dehydratase from Klebsiella oxytoca.